A 503-amino-acid polypeptide reads, in one-letter code: Aspartyl/glutamyl-tRNA(Asn/Gln) amidotransferase subunit B (503 aa).

The protein belongs to the GatB/GatE family. GatB subfamily. In terms of assembly, heterotrimer of A, B and C subunits.

The enzyme catalyses L-glutamyl-tRNA(Gln) + L-glutamine + ATP + H2O = L-glutaminyl-tRNA(Gln) + L-glutamate + ADP + phosphate + H(+). The catalysed reaction is L-aspartyl-tRNA(Asn) + L-glutamine + ATP + H2O = L-asparaginyl-tRNA(Asn) + L-glutamate + ADP + phosphate + 2 H(+). Allows the formation of correctly charged Asn-tRNA(Asn) or Gln-tRNA(Gln) through the transamidation of misacylated Asp-tRNA(Asn) or Glu-tRNA(Gln) in organisms which lack either or both of asparaginyl-tRNA or glutaminyl-tRNA synthetases. The reaction takes place in the presence of glutamine and ATP through an activated phospho-Asp-tRNA(Asn) or phospho-Glu-tRNA(Gln). The chain is Aspartyl/glutamyl-tRNA(Asn/Gln) amidotransferase subunit B from Rhodococcus jostii (strain RHA1).